Reading from the N-terminus, the 363-residue chain is 24-methylenesterol C-methyltransferase 2 (363 aa).

The chain crosses the membrane as a helical span at residues Met-6–Gly-26.

This sequence belongs to the class I-like SAM-binding methyltransferase superfamily. Erg6/SMT family.

It is found in the membrane. It catalyses the reaction 24-methylidenelophenol + S-adenosyl-L-methionine = (Z)-24-ethylidenelophenol + S-adenosyl-L-homocysteine + H(+). It participates in steroid biosynthesis; sterol biosynthesis. In terms of biological role, catalyzes the methyl transfer from S-adenosyl-methionine to the methylene group of 24-methylene lophenol to form 24-ethylidene lophenol. This is 24-methylenesterol C-methyltransferase 2 (Smt2-1) from Oryza sativa subsp. japonica (Rice).